The chain runs to 349 residues: Ribosomal RNA small subunit methyltransferase H (349 aa).

Residues 34–36 (GGH), Asp54, Phe81, Asp102, and Gln109 contribute to the S-adenosyl-L-methionine site.

It belongs to the methyltransferase superfamily. RsmH family.

The protein resides in the cytoplasm. The enzyme catalyses cytidine(1402) in 16S rRNA + S-adenosyl-L-methionine = N(4)-methylcytidine(1402) in 16S rRNA + S-adenosyl-L-homocysteine + H(+). Functionally, specifically methylates the N4 position of cytidine in position 1402 (C1402) of 16S rRNA. The chain is Ribosomal RNA small subunit methyltransferase H from Dehalococcoides mccartyi (strain ATCC BAA-2266 / KCTC 15142 / 195) (Dehalococcoides ethenogenes (strain 195)).